The primary structure comprises 314 residues: uncharacterized protein (314 aa).

The tract at residues 1–70 (MAGNSQRRGA…QGRHKKTDDT (70 aa)) is disordered. Residues 43–65 (QRPHHPAGKRAAKAARQAQGRHK) are compositionally biased toward basic residues. S-adenosyl-L-methionine is bound by residues Gly-265, Ile-285, and Leu-294.

Belongs to the class IV-like SAM-binding methyltransferase superfamily. RNA methyltransferase TrmH family.

This is an uncharacterized protein from Mycolicibacterium vanbaalenii (strain DSM 7251 / JCM 13017 / BCRC 16820 / KCTC 9966 / NRRL B-24157 / PYR-1) (Mycobacterium vanbaalenii).